The chain runs to 483 residues: Glutamate--tRNA ligase (483 aa).

A 'HIGH' region motif is present at residues 9–19; it reads PSPTGFLHIGN. The short motif at 253 to 257 is the 'KMSKS' region element; it reads KLSKR. Lys-256 contributes to the ATP binding site.

This sequence belongs to the class-I aminoacyl-tRNA synthetase family. Glutamate--tRNA ligase type 1 subfamily. In terms of assembly, monomer.

It localises to the cytoplasm. The enzyme catalyses tRNA(Glu) + L-glutamate + ATP = L-glutamyl-tRNA(Glu) + AMP + diphosphate. Catalyzes the attachment of glutamate to tRNA(Glu) in a two-step reaction: glutamate is first activated by ATP to form Glu-AMP and then transferred to the acceptor end of tRNA(Glu). The protein is Glutamate--tRNA ligase of Mycoplasma capricolum subsp. capricolum (strain California kid / ATCC 27343 / NCTC 10154).